We begin with the raw amino-acid sequence, 335 residues long: 5-dehydro-2-deoxygluconokinase (335 aa).

Belongs to the carbohydrate kinase PfkB family.

It carries out the reaction 5-dehydro-2-deoxy-D-gluconate + ATP = 6-phospho-5-dehydro-2-deoxy-D-gluconate + ADP + H(+). It participates in polyol metabolism; myo-inositol degradation into acetyl-CoA; acetyl-CoA from myo-inositol: step 5/7. In terms of biological role, catalyzes the phosphorylation of 5-dehydro-2-deoxy-D-gluconate (2-deoxy-5-keto-D-gluconate or DKG) to 6-phospho-5-dehydro-2-deoxy-D-gluconate (DKGP). The polypeptide is 5-dehydro-2-deoxygluconokinase (Geobacillus kaustophilus (strain HTA426)).